Consider the following 506-residue polypeptide: Radiation-sensitive protein 28 (506 aa).

WD repeat units follow at residues 55-94 (PLSI…HRND), 193-233 (HHKY…AVQD), 285-325 (RMQS…RLYS), 357-396 (AHLR…LQPE), and 404-451 (LGTQ…LWNK).

It localises to the nucleus. In terms of biological role, involved in transcription-coupled repair nucleotide excision repair (NER) of UV-induced DNA lesions. In Saccharomyces cerevisiae (strain ATCC 204508 / S288c) (Baker's yeast), this protein is Radiation-sensitive protein 28 (RAD28).